Consider the following 122-residue polypeptide: Small ribosomal subunit protein uS13 (122 aa).

Positions 95-122 (GLPVRGQRTKTNARTRKGPKKTIAGKKK) are disordered.

Belongs to the universal ribosomal protein uS13 family. In terms of assembly, part of the 30S ribosomal subunit. Forms a loose heterodimer with protein S19. Forms two bridges to the 50S subunit in the 70S ribosome.

Its function is as follows. Located at the top of the head of the 30S subunit, it contacts several helices of the 16S rRNA. In the 70S ribosome it contacts the 23S rRNA (bridge B1a) and protein L5 of the 50S subunit (bridge B1b), connecting the 2 subunits; these bridges are implicated in subunit movement. Contacts the tRNAs in the A and P-sites. The sequence is that of Small ribosomal subunit protein uS13 from Corynebacterium glutamicum (strain ATCC 13032 / DSM 20300 / JCM 1318 / BCRC 11384 / CCUG 27702 / LMG 3730 / NBRC 12168 / NCIMB 10025 / NRRL B-2784 / 534).